The primary structure comprises 663 residues: DNA ligase (663 aa).

Residues 31–35 (DFEFD), 80–81 (SL), and Glu-110 contribute to the NAD(+) site. The active-site N6-AMP-lysine intermediate is Lys-112. 4 residues coordinate NAD(+): Arg-133, Glu-170, Lys-285, and Lys-309. Cys-404, Cys-407, Cys-422, and Cys-428 together coordinate Zn(2+). The region spanning 585-663 (FIDNKLAGKT…SEDEFLKMIE (79 aa)) is the BRCT domain.

The protein belongs to the NAD-dependent DNA ligase family. LigA subfamily. Mg(2+) serves as cofactor. Mn(2+) is required as a cofactor.

It carries out the reaction NAD(+) + (deoxyribonucleotide)n-3'-hydroxyl + 5'-phospho-(deoxyribonucleotide)m = (deoxyribonucleotide)n+m + AMP + beta-nicotinamide D-nucleotide.. In terms of biological role, DNA ligase that catalyzes the formation of phosphodiester linkages between 5'-phosphoryl and 3'-hydroxyl groups in double-stranded DNA using NAD as a coenzyme and as the energy source for the reaction. It is essential for DNA replication and repair of damaged DNA. This Azobacteroides pseudotrichonymphae genomovar. CFP2 protein is DNA ligase.